The following is a 426-amino-acid chain: Pyruvate, phosphate dikinase regulatory protein, chloroplastic (426 aa).

A chloroplast-targeting transit peptide spans Met-1 to Arg-41. Disordered stretches follow at residues Met-1–Arg-76 and Ala-94–Asp-124. Residues Ala-94 to Ala-119 show a composition bias toward low complexity. His-153–Gly-160 contacts ADP.

This sequence belongs to the pyruvate, phosphate/water dikinase regulatory protein family. PDRP subfamily. In terms of assembly, homodimer at pH 7.5 and homotetramer at pH 8.3. It depends on Mg(2+) as a cofactor. As to expression, leaf mesophyll-cells.

It is found in the plastid. It localises to the chloroplast stroma. It catalyses the reaction N(tele)-phospho-L-histidyl/L-threonyl-[pyruvate, phosphate dikinase] + ADP = N(tele)-phospho-L-histidyl/O-phospho-L-threonyl-[pyruvate, phosphate dikinase] + AMP + H(+). The enzyme catalyses N(tele)-phospho-L-histidyl/O-phospho-L-threonyl-[pyruvate, phosphate dikinase] + phosphate + H(+) = N(tele)-phospho-L-histidyl/L-threonyl-[pyruvate, phosphate dikinase] + diphosphate. The protein operates within photosynthesis; C4 acid pathway. Regulated by light/dark exposure. Functionally, bifunctional serine/threonine kinase and phosphorylase involved in the dark/light-mediated regulation of PPDK by catalyzing its phosphorylation/dephosphorylation. Dark/light-induced changes in stromal concentrations of the competing ADP and Pi substrates govern the direction of the reaction. In the dark, phosphorylates the catalytic intermediate of PPDK (PPDK-HisP), inactivating it. Light exposure induces the phosphorolysis reaction that reactivates PPDK. Phosphorylates PPDK at both Ser-528 and Thr-527. Can use ADP as a high specificity substrate and GDP as a lower affinity substrate, but has no activity with UDP. This Zea mays (Maize) protein is Pyruvate, phosphate dikinase regulatory protein, chloroplastic (PDRP1).